The chain runs to 363 residues: NAD(P)H-quinone oxidoreductase subunit 1, chloroplastic (363 aa).

A run of 8 helical transmembrane segments spans residues 27–47 (LIPI…IVWL), 93–113 (WLFS…YLVV), 124–144 (LGVG…GLLM), 162–182 (AAQA…VALL), 200–220 (ILGW…IASL), 250–270 (FGLF…FVSV), 303–323 (ATLG…LSIL), and 343–363 (FLLP…LALL).

Belongs to the complex I subunit 1 family. As to quaternary structure, NDH is composed of at least 16 different subunits, 5 of which are encoded in the nucleus.

Its subcellular location is the plastid. It localises to the chloroplast thylakoid membrane. It catalyses the reaction a plastoquinone + NADH + (n+1) H(+)(in) = a plastoquinol + NAD(+) + n H(+)(out). The catalysed reaction is a plastoquinone + NADPH + (n+1) H(+)(in) = a plastoquinol + NADP(+) + n H(+)(out). Its function is as follows. NDH shuttles electrons from NAD(P)H:plastoquinone, via FMN and iron-sulfur (Fe-S) centers, to quinones in the photosynthetic chain and possibly in a chloroplast respiratory chain. The immediate electron acceptor for the enzyme in this species is believed to be plastoquinone. Couples the redox reaction to proton translocation, and thus conserves the redox energy in a proton gradient. The chain is NAD(P)H-quinone oxidoreductase subunit 1, chloroplastic from Chaetosphaeridium globosum (Charophycean green alga).